The following is a 344-amino-acid chain: MAPSKQYSEGGQLQLMDAERIEEEEECFESIDKLISQGINSGDVKKLQDAGIYTCNGLMMHTKKSLTGIKGLSEAKVDKICEAAEKLLSQGFITGSDLLIKRKSVVRITTGSQALDKLLGGGIETLCITEAFGEFRSGKTQLAHTLCVSTQLPIHMHGGNGKVAYIDTEGTFRPERIVPIAERFGMDANAVLDNIIYARAYTYEHQYNLLLGLAAKMAEEPFRLLIVDSVIALFRVDFSGRGELAERQQKLAQMLSRLTKIAEEFNVAVYITNQVIADPGGGMFITDLKKPAGGHVLAHAATIRLMLRKGKGEQRVCKIFDAPNLPEGEAVFQVTSGGIMDAKD.

ATP is bound at residue 133–140 (GEFRSGKT). R235 is a dsDNA binding site. 5 residues coordinate ssDNA: R235, F238, R241, R247, and R315. DsDNA-binding residues include R241 and R247.

Belongs to the RecA family. DMC1 subfamily. As to expression, expressed in pollen mother cells and root tips.

The protein resides in the nucleus. Recombinase that may participate in meiotic recombination, specifically in homologous strand assimilation, which is required for the resolution of meiotic double-strand breaks. Exhibits DNA-dependent ATPase activity when bound to single-stranded DNA (ssDNA). Mediates renaturation of homologous complementary strands as well as assimilation of single strands into homologous supercoiled duplexes leading to D-loop formation. Binds circular single-stranded DNA (ssDNA) and circular double-stranded DNA (dsDNA) in vitro. Catalyzes DNA homologous renaturation and DNA strand exchange. The rates of these activities are dependent on the state of ATP hydrolysis. Forms helical filaments along ssDNA and dsDNA, and promotes strand exchange between ssDNA and dsDNA with long DNA substrates of several thousand base pairs. The presence of the replication protein A is not required for this activity. Seems to be required for homologous pairing and subsequent chromosome segregation during male meiosis. May be not directly required for homologous pairing during male meiosis. Required for synaptonemal complex assembly and crossover formation. Functions redundantly with DMC1B. The polypeptide is Meiotic recombination protein DMC1 homolog A (Oryza sativa subsp. indica (Rice)).